A 158-amino-acid polypeptide reads, in one-letter code: MDFRQISPTTCTTPASSSSAAPPTPASSSSAAPPTPASSSSAAPPTPANCSTAAPPTPANCSTAAPPTPASSGSAAPPTPAPDHWWMEAPHHWLPGLLARCGSRQLPSSVGLACFGTAAVPRKPVNWACQGSHGELEASQVGSGKAGPCTPHPSLLGF.

2 disordered regions span residues 1 to 86 (MDFR…DHWW) and 138 to 158 (ASQV…LLGF). A compositionally biased stretch (low complexity) spans 7–76 (SPTTCTTPAS…PTPASSGSAA (70 aa)).

This is an uncharacterized protein from Homo sapiens (Human).